Reading from the N-terminus, the 223-residue chain is Protein FAM3D (223 aa).

A signal peptide spans 1 to 25; the sequence is MRVAGLIRVVVFIFTIVTMWVFLRS. 2 disulfide bridges follow: Cys-54/Cys-82 and Cys-60/Cys-217. The GG-type lectin domain maps to 62–221; sequence NNFFAFKISS…LELEGCVPRK (160 aa). N-linked (GlcNAc...) asparagine glycosylation is present at Asn-106.

The protein belongs to the FAM3 family.

Its subcellular location is the secreted. In Mus musculus (Mouse), this protein is Protein FAM3D.